We begin with the raw amino-acid sequence, 227 residues long: Cytochrome c oxidase subunit 2 (227 aa).

At 1–14 (MAYPFELGFQDATS) the chain is on the mitochondrial intermembrane side. The chain crosses the membrane as a helical span at residues 15-45 (PIMEELLHFHDHTLMIVFLISSLVLYIISLM). At 46–59 (LTTKLTHTSTMDAQ) the chain is on the mitochondrial matrix side. The chain crosses the membrane as a helical span at residues 60–87 (EIETIWTILPAIILILIALPSLRILYMM). Residues 88-227 (DEINDPSLTV…HFENWSSSML (140 aa)) lie on the Mitochondrial intermembrane side of the membrane. Histidine 161, cysteine 196, glutamate 198, cysteine 200, histidine 204, and methionine 207 together coordinate Cu cation. Mg(2+) is bound at residue glutamate 198.

It belongs to the cytochrome c oxidase subunit 2 family. In terms of assembly, component of the cytochrome c oxidase (complex IV, CIV), a multisubunit enzyme composed of 14 subunits. The complex is composed of a catalytic core of 3 subunits MT-CO1, MT-CO2 and MT-CO3, encoded in the mitochondrial DNA, and 11 supernumerary subunits COX4I, COX5A, COX5B, COX6A, COX6B, COX6C, COX7A, COX7B, COX7C, COX8 and NDUFA4, which are encoded in the nuclear genome. The complex exists as a monomer or a dimer and forms supercomplexes (SCs) in the inner mitochondrial membrane with NADH-ubiquinone oxidoreductase (complex I, CI) and ubiquinol-cytochrome c oxidoreductase (cytochrome b-c1 complex, complex III, CIII), resulting in different assemblies (supercomplex SCI(1)III(2)IV(1) and megacomplex MCI(2)III(2)IV(2)). Found in a complex with TMEM177, COA6, COX18, COX20, SCO1 and SCO2. Interacts with TMEM177 in a COX20-dependent manner. Interacts with COX20. Interacts with COX16. It depends on Cu cation as a cofactor.

It is found in the mitochondrion inner membrane. It catalyses the reaction 4 Fe(II)-[cytochrome c] + O2 + 8 H(+)(in) = 4 Fe(III)-[cytochrome c] + 2 H2O + 4 H(+)(out). Component of the cytochrome c oxidase, the last enzyme in the mitochondrial electron transport chain which drives oxidative phosphorylation. The respiratory chain contains 3 multisubunit complexes succinate dehydrogenase (complex II, CII), ubiquinol-cytochrome c oxidoreductase (cytochrome b-c1 complex, complex III, CIII) and cytochrome c oxidase (complex IV, CIV), that cooperate to transfer electrons derived from NADH and succinate to molecular oxygen, creating an electrochemical gradient over the inner membrane that drives transmembrane transport and the ATP synthase. Cytochrome c oxidase is the component of the respiratory chain that catalyzes the reduction of oxygen to water. Electrons originating from reduced cytochrome c in the intermembrane space (IMS) are transferred via the dinuclear copper A center (CU(A)) of subunit 2 and heme A of subunit 1 to the active site in subunit 1, a binuclear center (BNC) formed by heme A3 and copper B (CU(B)). The BNC reduces molecular oxygen to 2 water molecules using 4 electrons from cytochrome c in the IMS and 4 protons from the mitochondrial matrix. The chain is Cytochrome c oxidase subunit 2 (MT-CO2) from Tamias townsendii (Townsend's chipmunk).